We begin with the raw amino-acid sequence, 455 residues long: Glutamyl-tRNA reductase (455 aa).

Substrate-binding positions include 49 to 52 (TCNR), Ser-109, 114 to 116 (ETQ), and Gln-120. Cys-50 (nucleophile) is an active-site residue. 189 to 194 (GAGKMG) lines the NADP(+) pocket.

This sequence belongs to the glutamyl-tRNA reductase family. As to quaternary structure, homodimer.

The enzyme catalyses (S)-4-amino-5-oxopentanoate + tRNA(Glu) + NADP(+) = L-glutamyl-tRNA(Glu) + NADPH + H(+). It participates in porphyrin-containing compound metabolism; protoporphyrin-IX biosynthesis; 5-aminolevulinate from L-glutamyl-tRNA(Glu): step 1/2. In terms of biological role, catalyzes the NADPH-dependent reduction of glutamyl-tRNA(Glu) to glutamate 1-semialdehyde (GSA). The protein is Glutamyl-tRNA reductase of Bacillus velezensis (strain DSM 23117 / BGSC 10A6 / LMG 26770 / FZB42) (Bacillus amyloliquefaciens subsp. plantarum).